The primary structure comprises 247 residues: Probable transcriptional regulatory protein Glov_1245 (247 aa).

It belongs to the TACO1 family.

The protein resides in the cytoplasm. This chain is Probable transcriptional regulatory protein Glov_1245, found in Trichlorobacter lovleyi (strain ATCC BAA-1151 / DSM 17278 / SZ) (Geobacter lovleyi).